Here is a 356-residue protein sequence, read N- to C-terminus: Protein RecA (356 aa).

ATP is bound at residue 68-75; it reads GPESSGKT.

It belongs to the RecA family.

It is found in the cytoplasm. Can catalyze the hydrolysis of ATP in the presence of single-stranded DNA, the ATP-dependent uptake of single-stranded DNA by duplex DNA, and the ATP-dependent hybridization of homologous single-stranded DNAs. It interacts with LexA causing its activation and leading to its autocatalytic cleavage. This Clostridium botulinum (strain Alaska E43 / Type E3) protein is Protein RecA.